We begin with the raw amino-acid sequence, 802 residues long: Phenylalanine--tRNA ligase beta subunit (802 aa).

Positions 40-155 (SASLKNVVVG…AHVETGVNAI (116 aa)) constitute a tRNA-binding domain. The region spanning 409–484 (KAVNKIETSL…RIYGYDEIPV (76 aa)) is the B5 domain. 4 residues coordinate Mg(2+): Asp-462, Asp-468, Glu-471, and Glu-472. One can recognise an FDX-ACB domain in the interval 709–802 (PRYPEMTRDL…LQEKLNAIIR (94 aa)).

The protein belongs to the phenylalanyl-tRNA synthetase beta subunit family. Type 1 subfamily. Tetramer of two alpha and two beta subunits. It depends on Mg(2+) as a cofactor.

It is found in the cytoplasm. It carries out the reaction tRNA(Phe) + L-phenylalanine + ATP = L-phenylalanyl-tRNA(Phe) + AMP + diphosphate + H(+). The chain is Phenylalanine--tRNA ligase beta subunit from Listeria monocytogenes serovar 1/2a (strain ATCC BAA-679 / EGD-e).